A 93-amino-acid chain; its full sequence is MARLVNCIKLGREAEGLDFPPYPGALGKRIWEEVSKQAWADWMKQQTMLVNENRLNLADARARQYLARQMEKHFFGDGADAVQGYVPPTPPGA.

The protein belongs to the Fe(2+)-trafficking protein family.

Could be a mediator in iron transactions between iron acquisition and iron-requiring processes, such as synthesis and/or repair of Fe-S clusters in biosynthetic enzymes. The protein is Probable Fe(2+)-trafficking protein of Polaromonas naphthalenivorans (strain CJ2).